Consider the following 371-residue polypeptide: Putative 8-amino-7-oxononanoate synthase (371 aa).

Position 21 (Arg21) interacts with substrate. 108 to 109 (GY) provides a ligand contact to pyridoxal 5'-phosphate. Residue His133 coordinates substrate. Pyridoxal 5'-phosphate-binding positions include Ser180, 205 to 208 (DDAH), and 234 to 237 (TLSK). Lys237 carries the post-translational modification N6-(pyridoxal phosphate)lysine. Thr333 is a binding site for substrate.

It belongs to the class-II pyridoxal-phosphate-dependent aminotransferase family. BioF subfamily. As to quaternary structure, homodimer. Pyridoxal 5'-phosphate is required as a cofactor.

The enzyme catalyses 6-carboxyhexanoyl-[ACP] + L-alanine + H(+) = (8S)-8-amino-7-oxononanoate + holo-[ACP] + CO2. The protein operates within cofactor biosynthesis; biotin biosynthesis. In terms of biological role, catalyzes the decarboxylative condensation of pimeloyl-[acyl-carrier protein] and L-alanine to produce 8-amino-7-oxononanoate (AON), [acyl-carrier protein], and carbon dioxide. The sequence is that of Putative 8-amino-7-oxononanoate synthase (bioF) from Bacillus subtilis subsp. natto.